The primary structure comprises 202 residues: Segregation and condensation protein B (202 aa).

Belongs to the ScpB family. Homodimer. Homodimerization may be required to stabilize the binding of ScpA to the Smc head domains. Component of a cohesin-like complex composed of ScpA, ScpB and the Smc homodimer, in which ScpA and ScpB bind to the head domain of Smc. The presence of the three proteins is required for the association of the complex with DNA.

The protein resides in the cytoplasm. Functionally, participates in chromosomal partition during cell division. May act via the formation of a condensin-like complex containing Smc and ScpA that pull DNA away from mid-cell into both cell halves. This Clostridium acetobutylicum (strain ATCC 824 / DSM 792 / JCM 1419 / IAM 19013 / LMG 5710 / NBRC 13948 / NRRL B-527 / VKM B-1787 / 2291 / W) protein is Segregation and condensation protein B.